Here is a 152-residue protein sequence, read N- to C-terminus: UPF0225 protein YchJ (152 aa).

The protein belongs to the UPF0225 family.

The sequence is that of UPF0225 protein YchJ from Escherichia coli O6:K15:H31 (strain 536 / UPEC).